Consider the following 402-residue polypeptide: Argininosuccinate synthase (402 aa).

ATP contacts are provided by residues 13 to 21 (AYSGGLDTS) and alanine 40. Residues tyrosine 91 and serine 96 each coordinate L-citrulline. ATP is bound at residue glycine 121. Residues threonine 123, asparagine 127, and aspartate 128 each coordinate L-aspartate. Residue asparagine 127 participates in L-citrulline binding. L-citrulline-binding residues include arginine 131, serine 180, serine 189, glutamate 265, and tyrosine 277.

Belongs to the argininosuccinate synthase family. Type 1 subfamily. Homotetramer.

It is found in the cytoplasm. It catalyses the reaction L-citrulline + L-aspartate + ATP = 2-(N(omega)-L-arginino)succinate + AMP + diphosphate + H(+). Its pathway is amino-acid biosynthesis; L-arginine biosynthesis; L-arginine from L-ornithine and carbamoyl phosphate: step 2/3. The chain is Argininosuccinate synthase from Leptospira biflexa serovar Patoc (strain Patoc 1 / Ames).